The sequence spans 147 residues: Small ribosomal subunit protein uS13 (147 aa).

The interval 115 to 147 (SYKGRRHEAGLPVRGQRTKSTFRNSSSVGVKRS) is disordered. Over residues 132–147 (TKSTFRNSSSVGVKRS) the composition is skewed to polar residues.

This sequence belongs to the universal ribosomal protein uS13 family. Part of the 30S ribosomal subunit. Forms a loose heterodimer with protein S19. Forms two bridges to the 50S subunit in the 70S ribosome.

Functionally, located at the top of the head of the 30S subunit, it contacts several helices of the 16S rRNA. In the 70S ribosome it contacts the 23S rRNA (bridge B1a) and protein L5 of the 50S subunit (bridge B1b), connecting the 2 subunits; these bridges are implicated in subunit movement. In Methanobrevibacter smithii (strain ATCC 35061 / DSM 861 / OCM 144 / PS), this protein is Small ribosomal subunit protein uS13.